The primary structure comprises 376 residues: Alkanesulfonate monooxygenase (376 aa).

This sequence belongs to the SsuD family.

It carries out the reaction an alkanesulfonate + FMNH2 + O2 = an aldehyde + FMN + sulfite + H2O + 2 H(+). Its function is as follows. Catalyzes the desulfonation of aliphatic sulfonates. This Bacillus licheniformis (strain ATCC 14580 / DSM 13 / JCM 2505 / CCUG 7422 / NBRC 12200 / NCIMB 9375 / NCTC 10341 / NRRL NRS-1264 / Gibson 46) protein is Alkanesulfonate monooxygenase.